A 433-amino-acid polypeptide reads, in one-letter code: Serine carboxypeptidase-like 8 (433 aa).

The signal sequence occupies residues methionine 1–serine 19. Disulfide bonds link cysteine 78–cysteine 323, cysteine 241–cysteine 255, and cysteine 279–cysteine 289. N-linked (GlcNAc...) asparagine glycosylation occurs at asparagine 99. The active site involves serine 173. Residues asparagine 283, asparagine 324, and asparagine 342 are each glycosylated (N-linked (GlcNAc...) asparagine). Active-site residues include aspartate 358 and histidine 411. N-linked (GlcNAc...) asparagine glycosylation is present at asparagine 418.

This sequence belongs to the peptidase S10 family. In terms of processing, N-glycosylated. Highly expressed in seedlings. Expressed in leaves, stems, flowers and siliques, and at low levels in roots.

Its subcellular location is the vacuole. The enzyme catalyses 1-O-(trans-sinapoyl)-beta-D-glucose + (S)-malate = sinapoyl (S)-malate + D-glucose. It catalyses the reaction 2 1-O-(trans-sinapoyl)-beta-D-glucose = 1,2-di-O-sinapoyl beta-D-glucose + D-glucose. With respect to regulation, 95% inhibition by diisopropyl fluorophosphate (DFP) and 30% by phenylmethylsulfonyl fluoride (PMSF). Functionally, involved in plants secondary metabolism. Functions as acyltransferase to form the sinapate ester sinapoylmalate. Also capable of catalyzing the formation of 1,2-bis-O-sinapoyl beta-D-glucoside. The polypeptide is Serine carboxypeptidase-like 8 (Arabidopsis thaliana (Mouse-ear cress)).